Here is a 714-residue protein sequence, read N- to C-terminus: MTSNARNGPLPPNPLANSGNNRDISADITMAEQVVRPESQTQVENSSTKQPNGQTKPMSASNAKDPLRPRRKKAKRACFACQRAHLTCGDERPCQRCIKRGIQNSCHDGVRKKAKYLHDAPNEALMPHLQGQLYTQTNAVRNNMSLTSNGSNSKTNFYPRQNSNFNGYYATKNDGSLSQSQLHDAGRPDTFPSQSPVSPTFSITANSATSGNQNMPSSLPASNGNASGQAQNGFGSAFFDPCDPALFNFDLASMNFGNHYGALEFGMLGHMATGAGDTPPSDSATQHGSVGRNGSGTFAPGSNFGESPTAQPSFLFGDPTIAGDWSSSVHTRNIYNQNMNHMSETPHAFAIESGPANFASPNSIESPLLTNSATFDDNTTSAYQNRSSMNPMPPQRQPVVSTPQLKHLQLSKRRQRNPSAIYESVKEPYSYTTGFHSLTAFIQRRFSTQNTLRIAKALASIRPSFIATTKTLNRDDLIFMEKCFQRTLWEYEDFINACGTPTIVCRRTGEIAAVGKEFSILTGWRKEVLLGKEPNLNINTGGSSGSTSGTSSRGSFTPRAGMEVNPSGRTQPVFLAELLDDESVVEFYEDFAKLAFGDSRGSVMTTCKLLKYKTKADTDMLPGNTGGTGGGDGQSAASGNGHVKVENGMAASNGQAQPLSQPQRRWSRGGIAGEAGMNQLGFKDGKVECSYCWTVKRDVFDIPMLIVMNFLPCI.

Residues 1 to 71 (MTSNARNGPL…NAKDPLRPRR (71 aa)) form a disordered region. Polar residues predominate over residues 38–62 (ESQTQVENSSTKQPNGQTKPMSASN). A DNA-binding region (zn(2)-C6 fungal-type) is located at residues 78–106 (CFACQRAHLTCGDERPCQRCIKRGIQNSC). Disordered stretches follow at residues 176–228 (SLSQ…NASG), 274–312 (GAGDTPPSDSATQHGSVGRNGSGTFAPGSNFGESPTAQP), and 539–567 (NTGGSSGSTSGTSSRGSFTPRAGMEVNPS). Over residues 191–228 (FPSQSPVSPTFSITANSATSGNQNMPSSLPASNGNASG) the composition is skewed to polar residues. The span at 545–555 (GSTSGTSSRGS) shows a compositional bias: low complexity.

It belongs to the ERT1/acuK family.

It localises to the nucleus. In terms of biological role, transcription factor which regulates nonfermentable carbon utilization. Activator of gluconeogenetic genes. The protein is Transcription activator of gluconeogenesis UREG_00958 of Uncinocarpus reesii (strain UAMH 1704).